A 285-amino-acid polypeptide reads, in one-letter code: 2,3,4,5-tetrahydropyridine-2,6-dicarboxylate N-succinyltransferase (285 aa).

Substrate contacts are provided by arginine 111 and aspartate 148.

It belongs to the transferase hexapeptide repeat family. In terms of assembly, homotrimer.

Its subcellular location is the cytoplasm. The enzyme catalyses (S)-2,3,4,5-tetrahydrodipicolinate + succinyl-CoA + H2O = (S)-2-succinylamino-6-oxoheptanedioate + CoA. The protein operates within amino-acid biosynthesis; L-lysine biosynthesis via DAP pathway; LL-2,6-diaminopimelate from (S)-tetrahydrodipicolinate (succinylase route): step 1/3. The protein is 2,3,4,5-tetrahydropyridine-2,6-dicarboxylate N-succinyltransferase of Rhizobium meliloti (strain 1021) (Ensifer meliloti).